We begin with the raw amino-acid sequence, 358 residues long: MASLNDVCYEKIKNNFYYGLFGDFKLVVDKNTECFNATKLCNSGGKRFRDWTKLEKSKKLMEYYKGRRDDHRGGSNFYEVKGDNKDDEVSKTTGQYVKKELILDIASWISTEFYDKCNQIVIDFFVVEFKEKEKELTHQLSIVEENLKKLRIENENNLEEIKLKDTRIDELIYASKRQEQMLLESHNLLKSMGIEVKDIKEQNNELLNEVGELREDNNELQEQVENVQEQIQKVQVKLEISVEDRAPQPDKRGKKERFILLKRNDEHYPYYTIRAQDINAKKAVKRQQGKYEEVLILLDLVCHPNTKTFYVRIKDDLKKKGVKFNLCEIDISKSVITEKDLIEEMERINEEKRTLIIE.

Residues 15-124 (NFYYGLFGDF…DKCNQIVIDF (110 aa)) form the KilA-N domain. The stretch at 126 to 245 (VVEFKEKEKE…VKLEISVEDR (120 aa)) forms a coiled coil.

It belongs to the IIV-6 006L/238R/313L/468L family.

This chain is Putative KilA-N domain-containing protein 313L, found in Acheta domesticus (House cricket).